The following is a 488-amino-acid chain: 3-octaprenyl-4-hydroxybenzoate carboxy-lyase (488 aa).

N172 contacts Mn(2+). Residues 175–177 (IYR), 189–191 (RWL), and 194–195 (RG) each bind prenylated FMN. E238 contributes to the Mn(2+) binding site. D287 serves as the catalytic Proton donor.

Belongs to the UbiD family. As to quaternary structure, homohexamer. Prenylated FMN serves as cofactor. Requires Mn(2+) as cofactor.

It localises to the cell membrane. The catalysed reaction is a 4-hydroxy-3-(all-trans-polyprenyl)benzoate + H(+) = a 2-(all-trans-polyprenyl)phenol + CO2. It functions in the pathway cofactor biosynthesis; ubiquinone biosynthesis. Functionally, catalyzes the decarboxylation of 3-octaprenyl-4-hydroxy benzoate to 2-octaprenylphenol, an intermediate step in ubiquinone biosynthesis. In Stutzerimonas stutzeri (strain A1501) (Pseudomonas stutzeri), this protein is 3-octaprenyl-4-hydroxybenzoate carboxy-lyase.